A 429-amino-acid chain; its full sequence is Endo-beta-1,4-galactanase (429 aa).

The first 21 residues, 1-21, serve as a signal peptide directing secretion; sequence MKSKVKMFFAAAIVWSACSST. Substrate is bound at residue 146 to 149; the sequence is DPAK. Residue Glu194 is the Proton donor of the active site. Residues 233 to 234 and His267 each bind substrate; that span reads TN. Residue Glu292 is the Nucleophile of the active site. Residue Thr296 coordinates substrate. Residues Asp301, Asp303, His305, and Asn307 each contribute to the Ca(2+) site. Substrate contacts are provided by Lys311 and Asp388. Ca(2+) is bound by residues Ser396 and Asp399.

The protein belongs to the glycosyl hydrolase 53 family. Ca(2+) is required as a cofactor.

It is found in the secreted. It carries out the reaction The enzyme specifically hydrolyzes (1-&gt;4)-beta-D-galactosidic linkages in type I arabinogalactans.. In terms of biological role, involved in galactan degradation. Degrades arabinose-free galactan to galactooligosaccharides, producing galactotetraose as the main product along with galactotriose, galactobiose, and galactose. Is also able to degrade galactotetraose, galactotriose and galactobiose, suggesting an additional exo-mode of activity. May hydrolyze the beta-1,4-galactan linkages of the galactan portion of arabinogalactan type I, a pectic plant polysaccharide from which most of the arabinose has been removed. The protein is Endo-beta-1,4-galactanase of Bacillus subtilis (strain 168).